The chain runs to 147 residues: Small ribosomal subunit protein uS12 (147 aa).

This sequence belongs to the universal ribosomal protein uS12 family. As to quaternary structure, part of the 30S ribosomal subunit.

With S4 and S5 plays an important role in translational accuracy. Located at the interface of the 30S and 50S subunits. In Staphylothermus marinus (strain ATCC 43588 / DSM 3639 / JCM 9404 / F1), this protein is Small ribosomal subunit protein uS12.